A 93-amino-acid polypeptide reads, in one-letter code: Alpha-defensin 21 (93 aa).

The N-terminal stretch at 1 to 19 (MKTLVLLSALILLAYQVQT) is a signal peptide. Positions 20-58 (DPIQNTDEETNTEEQPGEDDQAVSVSFGGQEGSALHEKL) are excised as a propeptide. Residues 22 to 43 (IQNTDEETNTEEQPGEDDQAVS) are disordered. A compositionally biased stretch (acidic residues) spans 25–40 (TDEETNTEEQPGEDDQ). Disulfide bonds link Cys64–Cys89, Cys66–Cys81, and Cys71–Cys88.

This sequence belongs to the alpha-defensin family.

It is found in the secreted. In terms of biological role, may have microbicidal activities. This chain is Alpha-defensin 21 (Defa21), found in Mus musculus (Mouse).